The primary structure comprises 694 residues: Phosphatase and actin regulator 4 (694 aa).

Disordered regions lie at residues 1-354 (MEDP…SPLV) and 375-405 (QDIS…PSRL). A compositionally biased stretch (basic residues) spans 45-54 (KPWKWRKKKS). Residues 55–84 (SDKFKETSEVLERKISMRKPREELVKRGVL) are compositionally biased toward basic and acidic residues. An RPEL 1 repeat occupies 63–88 (EVLERKISMRKPREELVKRGVLLEDP). Serine 116, serine 118, serine 129, and serine 145 each carry phosphoserine. Composition is skewed to low complexity over residues 184–209 (AGST…TAAT) and 231–249 (TLPA…TAPA). Pro residues predominate over residues 250 to 259 (KQPPIPPPKP). A phosphoserine mark is found at serine 264, serine 285, serine 335, and serine 337. Pro residues predominate over residues 329–352 (LIIPPSSPSPPLPTHIPPEPPRSP). Residues 381–392 (EDQKTEVPKKIQ) show a composition bias toward basic and acidic residues. Position 420 is a phosphoserine (serine 420). A Phosphothreonine modification is found at threonine 425. Phosphoserine is present on residues serine 436, serine 446, serine 457, serine 503, serine 505, serine 549, and serine 582. Residues 467-562 (VPDDEEEEQT…TNLNSWPRKS (96 aa)) are disordered. Polar residues predominate over residues 546–559 (SRPSEPETNLNSWP). 2 RPEL repeats span residues 575-600 (NTLI…QPKN) and 613-638 (RRLT…RFNE). Residues 589–608 (ELEQRNILQPKNEADRQAEK) are disordered. Serine 620 is modified (phosphoserine).

This sequence belongs to the phosphatase and actin regulator family. In terms of assembly, binds PPP1CA and actin.

The protein resides in the cytoplasm. The protein localises to the cell projection. It localises to the lamellipodium. Its function is as follows. Regulator of protein phosphatase 1 (PP1) required for neural tube and optic fissure closure, and enteric neural crest cell (ENCCs) migration during development. Acts as an activator of PP1 by interacting with PPP1CA and preventing phosphorylation of PPP1CA at 'Thr-320'. During neural tube closure, localizes to the ventral neural tube and activates PP1, leading to down-regulate cell proliferation within cranial neural tissue and the neural retina. Also acts as a regulator of migration of enteric neural crest cells (ENCCs) by activating PP1, leading to dephosphorylation and subsequent activation of cofilin (COF1 or COF2) and repression of the integrin signaling through the RHO/ROCK pathway. In Mus musculus (Mouse), this protein is Phosphatase and actin regulator 4 (Phactr4).